A 487-amino-acid polypeptide reads, in one-letter code: DNA polymerase delta small subunit (487 aa).

Met1 is modified (N-acetylmethionine). The residue at position 20 (Ser20) is a Phosphoserine.

The protein belongs to the DNA polymerase delta/II small subunit family. In terms of assembly, DNA polymerase delta is a heterotrimer of POL3, POL32 and HYS2.

It is found in the nucleus. It carries out the reaction DNA(n) + a 2'-deoxyribonucleoside 5'-triphosphate = DNA(n+1) + diphosphate. In terms of biological role, DNA polymerase delta (DNA polymerase III) participates in chromosomal DNA replication. It is required during synthesis of the leading and lagging DNA strands at the replication fork and binds at/or near replication origins and moves along DNA with the replication fork. It has 3'-5' proofreading exonuclease activity that correct errors arising during DNA replication. It is also involved in DNA synthesis during DNA repair. In Saccharomyces cerevisiae (strain ATCC 204508 / S288c) (Baker's yeast), this protein is DNA polymerase delta small subunit (POL31).